Consider the following 1857-residue polypeptide: MFGLKVKKKRNKAEKGLILANKAAKDSQGDTEALQEEPSHQEGPRGDLVHDDASIFPVPSASPKRRSKLLTKIHDGEVRSQNYQIAITITEARQLVGENIDPVVTIEIGDEKKQSTVKEGTNSPFYNEYFVFDFIGPQVHLFDKIIKISVFHHKLIGSVLIGSFKVDLGTVYNQPGHQFCNKWALLTDPGDIRTGTKGYLKCDISVMGKGDVLKTSPKTSDTEEPIEKNLLIPNGFPLERPWARFYVRLYKAEGLPKMNSSIMANVTKAFVGDSKDLVDPFVEVSFAGQMGRTTVQKNCADPVWHEQVIFKEMFPPLCRRVKIQVWDEGSMNDVALATHFIDLKKISNEQDGDKGFLPTFGPAWINLYGSPRNHSLMDDYQEMNEGFGEGVSFRGRILVEIAVEILSGRAQESKFSKALKELKLPSKDKDSKSSKGKDKADKTEDGKSQQASNKTNSTEVEVESFDVPPEIVPEKNEEFLLFGAFFEATMIDRKIGDKPISFEVSIGNFGNLIDGGSHHGSKKSAESAEEDLLPLLHEGQGDVAHDVPIPMASTTHPEKPLVTEGNRNYNYLPFEAKKPCVYFISSWGDQTFRLHWSNMLEKMADFLEESIEEVRELIKISQEAPEEKMKTVLSDFISRSSAFISEAEKKPKMLNQTTLDKKRLTLCWQELEAMCKEAKGIIQQQKKKLSVDEMIHEAQNFVEKIRFLVDEPQHTIPDVFIWMLSNNRRVAYARIASKDLLYSPVAGQMGKHCGKIKTHFLKPPGKRPAGWSVQAKVDVYLWLGSIKHASAILDNLPVGYEAEMSSKGAGTNHPPSNLLYQEQHVFQLRAHMYQARGLIAADSNGLSDPFAKVTFLSHCQTTKIISQTLSPTWNQMLLFNDLVLHGDVKELAESPPLVVVELYDSDAVGKPEYLGATVAAPVVKLADQDYEPPRLCYHPIFCGNLSGGDLLAVFELLQVPPSGLQGLPPVEPPDITQIYPVPANIRPVLSKYRVEVLFWGVREMKKVQLLSVDRPQALIECGGQGVKSCVIQSYKNNPNFSIQADAFEVELPENELLHPPLSICVVDWRAFGRSTLVGTYTINYLKQFLCKLREPLAPITQVDGTQPGHDISDSLTATESSGAHSSSQDPPADHIYVDVEPPPTVVPDSAQAQPAILVDVPDSSPMLEPEHTPVAQEPPKDGKPKDPRKPSRRSTKRRKRTIADESAENVIDWWSKYYASLKKAQKAKERNPKGKKGNTEAKPDEVVVDIEDGPKKKKDKMLKKKPKDDGIPNLAILQIYDGDLESEFNNFEDWVKTFELFRGKSTEDDHGLDGDRVIGKFKGSFCIYKSPQDSSSEDSGQLRIQQGIPPNHPVTVLIRVYIVAAFNLSPADPDGKSDPYIVIKLGKTEIKDRDKYIPKQLNPVFGRSFEIQATFPKESLLSILIYDHDMIGTDDLIGETKIDLENRFYSKHRAICGLQSQYEIEGYNAWRDTSKPTEILTKLCKDNKLDGPYFHPGKIQIGNQVFSGKTIFTEEDTDETVESYEHLALKVLHSWEDIPEVGCRLVPEHIETRPLYHKDKPGMEQGRLQMWVDMFPKDMPQPGPPVDISPRRPKGYELRVTIWNTEDVILEDENIFTGQKSSDIYVKGWLKGLEDDKQETDVHYNSLTGEGNFNWRFLFPFQYLPAEKQMVITKRENIFSLEKMECKTPAVLVLQVWDFERLSSDDFLGTLEMNLNSFPRAAKSAKACDLAKFENASEETKISIFQQKRVRGWWPFSKSKELTGKVEAEFHLVTAEEAEKNPVGKARKEPEPLAKPNRPDTSFSWFMSPFKCLYYLIWKNYKKYIIIAFILIILIIFLVLFIYTLPGAISRRIVVGS.

The Cytoplasmic portion of the chain corresponds to 1–1824 (MFGLKVKKKR…YLIWKNYKKY (1824 aa)). The segment at 15–63 (KGLILANKAAKDSQGDTEALQEEPSHQEGPRGDLVHDDASIFPVPSASP) is disordered. Over residues 37 to 53 (EPSHQEGPRGDLVHDDA) the composition is skewed to basic and acidic residues. 2 C2 domains span residues 65–181 (RRSK…QFCN) and 225–356 (PIEK…DKGF). Positions 426 to 447 (SKDKDSKSSKGKDKADKTEDGK) are enriched in basic and acidic residues. Positions 426 to 469 (SKDKDSKSSKGKDKADKTEDGKSQQASNKTNSTEVEVESFDVPP) are disordered. Residues 448 to 459 (SQQASNKTNSTE) show a composition bias toward polar residues. C2 domains are found at residues 810-937 (GTNH…RLCY) and 969-1099 (PVEP…LAPI). Ca(2+)-binding residues include Asp842, Asp848, Asp904, and Asp906. Disordered regions lie at residues 1101-1148 (QVDG…VVPD), 1161-1203 (PDSS…RTIA), and 1224-1246 (AQKAKERNPKGKKGNTEAKPDEV). A compositionally biased stretch (polar residues) spans 1113 to 1129 (DSLTATESSGAHSSSQD). The span at 1178–1189 (PPKDGKPKDPRK) shows a compositional bias: basic and acidic residues. Residues 1190–1200 (PSRRSTKRRKR) show a composition bias toward basic residues. Residues 1226-1245 (KAKERNPKGKKGNTEAKPDE) show a composition bias toward basic and acidic residues. C2 domains follow at residues 1338-1457 (DSGQ…AICG) and 1578-1729 (DMPQ…KACD). Asp1372, Asp1378, Asp1427, Asp1429, and Asp1435 together coordinate Ca(2+). A helical transmembrane segment spans residues 1825–1845 (IIIAFILIILIIFLVLFIYTL). Topologically, residues 1846 to 1857 (PGAISRRIVVGS) are extracellular.

The protein belongs to the ferlin family. The cofactor is Ca(2+).

It localises to the membrane. In Homo sapiens (Human), this protein is Fer-1-like protein 6 (FER1L6).